A 1368-amino-acid polypeptide reads, in one-letter code: DNA-directed RNA polymerase subunit beta (1368 aa).

The protein belongs to the RNA polymerase beta chain family. In terms of assembly, the RNAP catalytic core consists of 2 alpha, 1 beta, 1 beta' and 1 omega subunit. When a sigma factor is associated with the core the holoenzyme is formed, which can initiate transcription.

It catalyses the reaction RNA(n) + a ribonucleoside 5'-triphosphate = RNA(n+1) + diphosphate. DNA-dependent RNA polymerase catalyzes the transcription of DNA into RNA using the four ribonucleoside triphosphates as substrates. This chain is DNA-directed RNA polymerase subunit beta, found in Paraburkholderia xenovorans (strain LB400).